A 124-amino-acid polypeptide reads, in one-letter code: UPF0102 protein MSMEG_2508/MSMEI_2448 (124 aa).

This sequence belongs to the UPF0102 family.

The chain is UPF0102 protein MSMEG_2508/MSMEI_2448 from Mycolicibacterium smegmatis (strain ATCC 700084 / mc(2)155) (Mycobacterium smegmatis).